Here is a 32-residue protein sequence, read N- to C-terminus: Lectin (32 aa).

It belongs to the leguminous lectin family. As to quaternary structure, homotetramer.

Its function is as follows. Metalloglycoprotein, containing Ca, Mg, Mn, and Zn and the carbohydrates galactose, glucosamine, mannose, and fucose. It agglutinates erythrocytes of blood group A1. This Macrotyloma axillare (Perennial horse gram) protein is Lectin.